We begin with the raw amino-acid sequence, 179 residues long: Large ribosomal subunit protein uL5 (179 aa).

It belongs to the universal ribosomal protein uL5 family. Part of the 50S ribosomal subunit; part of the 5S rRNA/L5/L18/L25 subcomplex. Contacts the 5S rRNA and the P site tRNA. Forms a bridge to the 30S subunit in the 70S ribosome.

In terms of biological role, this is one of the proteins that bind and probably mediate the attachment of the 5S RNA into the large ribosomal subunit, where it forms part of the central protuberance. In the 70S ribosome it contacts protein S13 of the 30S subunit (bridge B1b), connecting the 2 subunits; this bridge is implicated in subunit movement. Contacts the P site tRNA; the 5S rRNA and some of its associated proteins might help stabilize positioning of ribosome-bound tRNAs. The sequence is that of Large ribosomal subunit protein uL5 from Geotalea daltonii (strain DSM 22248 / JCM 15807 / FRC-32) (Geobacter daltonii).